A 140-amino-acid polypeptide reads, in one-letter code: Large ribosomal subunit protein uL16 (140 aa).

The protein belongs to the universal ribosomal protein uL16 family. Part of the 50S ribosomal subunit.

Binds 23S rRNA and is also seen to make contacts with the A and possibly P site tRNAs. In Phytoplasma australiense, this protein is Large ribosomal subunit protein uL16.